Reading from the N-terminus, the 358-residue chain is Putative ankyrin repeat protein FPV242 (358 aa).

ANK repeat units lie at residues 6-35, 40-69, 91-118, 119-147, 149-177, 180-209, 214-243, 248-277, 280-312, and 316-345; these read NNYR…NMIV, NNHT…NLVY, TRRN…DKGV, ELTG…SVEY, GFFP…DINK, CGET…DIEK, EQDP…SIDT, NHKP…NPFI, EGNT…RLPG, and YYIQ…RITS.

This is Putative ankyrin repeat protein FPV242 from Fowlpox virus (strain NVSL) (FPV).